Reading from the N-terminus, the 111-residue chain is UPF0339 protein ACIAD0721 (111 aa).

2 tandem repeats follow at residues 10–58 (AKDG…RYER) and 61–109 (AKND…VKDL). The interval 89 to 111 (SRDKGIESVKNNGTTATVKDLTG) is disordered.

It belongs to the UPF0339 family. Duplicated subfamily.

This Acinetobacter baylyi (strain ATCC 33305 / BD413 / ADP1) protein is UPF0339 protein ACIAD0721.